Here is a 427-residue protein sequence, read N- to C-terminus: Sperm-associated antigen 1A (427 aa).

A disordered region spans residues 46–113; the sequence is QKKGPGYREG…GPGSAGESCN (68 aa). TPR repeat units follow at residues 125-158, 167-200, 202-234, 302-335, 336-369, and 371-403; these read LARL…CIEA, CVLY…HPFS, KPLL…DISV, FTIL…KPNE, CAIY…EPKN, and KAFY…DPNV.

The protein resides in the cytoplasm. The protein localises to the dynein axonemal particle. Its function is as follows. May play a role in the cytoplasmic assembly and/or trafficking of the axonemal dynein arms. This Danio rerio (Zebrafish) protein is Sperm-associated antigen 1A (spag1a).